The primary structure comprises 350 residues: Peptide-N(4)-(N-acetyl-beta-glucosaminyl)asparagine amidase (350 aa).

Zn(2+) contacts are provided by Cys123, Cys126, Cys157, and Cys160. Residue Cys183 is the Nucleophile of the active site. Catalysis depends on residues His210 and Asp227. Glu230 lines the substrate pocket. Positions Glu324–Arg350 are disordered. Residues Asp340–Arg350 show a composition bias toward basic and acidic residues.

This sequence belongs to the transglutaminase-like superfamily. PNGase family. The cofactor is Zn(2+).

It is found in the cytoplasm. It carries out the reaction Hydrolysis of an N(4)-(acetyl-beta-D-glucosaminyl)asparagine residue in which the glucosamine residue may be further glycosylated, to yield a (substituted) N-acetyl-beta-D-glucosaminylamine and a peptide containing an aspartate residue.. Its function is as follows. Specifically deglycosylates the denatured form of N-linked glycoproteins in the cytoplasm and assists their proteasome-mediated degradation. Cleaves the beta-aspartyl-glucosamine (GlcNAc) of the glycan and the amide side chain of Asn, converting Asn to Asp. Prefers proteins containing high-mannose over those bearing complex type oligosaccharides. Can recognize misfolded proteins in the endoplasmic reticulum that are exported to the cytosol to be destroyed and deglycosylate them, while it has no activity toward native proteins. Deglycosylation is a prerequisite for subsequent proteasome-mediated degradation of some, but not all, misfolded glycoproteins. The chain is Peptide-N(4)-(N-acetyl-beta-glucosaminyl)asparagine amidase (PNG1) from Eremothecium gossypii (strain ATCC 10895 / CBS 109.51 / FGSC 9923 / NRRL Y-1056) (Yeast).